A 115-amino-acid polypeptide reads, in one-letter code: NADH-ubiquinone oxidoreductase chain 3 (115 aa).

The next 3 membrane-spanning stretches (helical) occupy residues 4–24, 55–75, and 87–107; these read LTVLSVNIALSTCLITIAFWL, FFLVAITFLLFDLEIALLLPL, and MMLTAFILVSVLALGLAYEWM.

Belongs to the complex I subunit 3 family. In terms of assembly, core subunit of respiratory chain NADH dehydrogenase (Complex I) which is composed of 45 different subunits. Interacts with TMEM186. Interacts with TMEM242.

It is found in the mitochondrion inner membrane. It carries out the reaction a ubiquinone + NADH + 5 H(+)(in) = a ubiquinol + NAD(+) + 4 H(+)(out). Core subunit of the mitochondrial membrane respiratory chain NADH dehydrogenase (Complex I) which catalyzes electron transfer from NADH through the respiratory chain, using ubiquinone as an electron acceptor. Essential for the catalytic activity of complex I. This chain is NADH-ubiquinone oxidoreductase chain 3, found in Peromyscus slevini (Slevin's mouse).